The chain runs to 585 residues: Conglutin alpha 3 (585 aa).

An N-terminal signal peptide occupies residues 1–23 (MANPFLLSLSLCLVLLYTSACLG). Cystine bridges form between C32-C65 and C108-C406. Residues 37–258 (LNALEPDNRI…ALNIDEDTVH (222 aa)) form the Cupin type-1 1 domain. 3 disordered regions span residues 113 to 147 (EEAQQSQSRQERRRGQRSQSQEQEDSHQKIRHFRE), 199 to 240 (EEYP…ILSG), and 283 to 402 (KWQE…NGLE). Residues 136-147 (EDSHQKIRHFRE) are compositionally biased toward basic and acidic residues. Residues 211–224 (RQQHQRPSGRRHGQ) are compositionally biased toward basic residues. Residues 309 to 320 (REEEEKEEEDEP) show a composition bias toward acidic residues. The span at 338-350 (ERGRGRGGSEWKR) shows a compositional bias: basic and acidic residues. Positions 412–558 (ENIADPTRAD…AFRLSLNQVS (147 aa)) constitute a Cupin type-1 2 domain. Over residues 565–579 (NHNPLVTPQSQSQDH) the composition is skewed to polar residues. Positions 565 to 585 (NHNPLVTPQSQSQDHNLVKVA) are disordered.

This sequence belongs to the 11S seed storage protein (globulins) family. Hexamer; each subunit is composed of an acidic and a basic chain derived from a single precursor and linked by a disulfide bond. Component of globulins complexes which accumulate in seeds.

Sulfur-rich seed storage protein. This protein found in the seeds of many leguminous and non-leguminous plants is the source of sulfur-containing amino acids in seed meals. In Lupinus angustifolius (Narrow-leaved blue lupine), this protein is Conglutin alpha 3.